We begin with the raw amino-acid sequence, 89 residues long: Small ribosomal subunit protein uS15 (89 aa).

This sequence belongs to the universal ribosomal protein uS15 family. In terms of assembly, part of the 30S ribosomal subunit. Forms a bridge to the 50S subunit in the 70S ribosome, contacting the 23S rRNA.

Its function is as follows. One of the primary rRNA binding proteins, it binds directly to 16S rRNA where it helps nucleate assembly of the platform of the 30S subunit by binding and bridging several RNA helices of the 16S rRNA. In terms of biological role, forms an intersubunit bridge (bridge B4) with the 23S rRNA of the 50S subunit in the ribosome. This chain is Small ribosomal subunit protein uS15, found in Corynebacterium urealyticum (strain ATCC 43042 / DSM 7109).